The primary structure comprises 30 residues: Acyl-CoA-binding protein 1 (30 aa).

Positions 1–15 (ALKDEFEEHAEKAKT) are enriched in basic and acidic residues. The interval 1-30 (ALKDEFEEHAEKAKTLPENTSNENKLILYG) is disordered. The ACB domain maps to 2 to 30 (LKDEFEEHAEKAKTLPENTSNENKLILYG).

This sequence belongs to the ACBP family.

The protein resides in the cytoplasm. In terms of biological role, binds medium- and long-chain acyl-CoA esters with very high affinity and may function as an intracellular carrier of acyl-CoA esters. The protein is Acyl-CoA-binding protein 1 of Digitalis lanata (Grecian foxglove).